Here is a 360-residue protein sequence, read N- to C-terminus: E3 ubiquitin-protein ligase RNF146 (360 aa).

The RING-type zinc finger occupies 37–75; sequence CAICLQTCVHPVSLPCKHVFCYLCVKGASWLGKRCALCR. Glycyl lysine isopeptide (Lys-Gly) (interchain with G-Cter in ubiquitin) cross-links involve residues K85 and K95. In terms of domain architecture, WWE spans 92–168; the sequence is EELKAASRGN…EHGRRRKIKR (77 aa). Residues Y108, R111, and W115 each coordinate a glycoprotein. Residue K131 forms a Glycyl lysine isopeptide (Lys-Gly) (interchain with G-Cter in ubiquitin) linkage. A glycoprotein is bound by residues Y145, Q154, R164, and K176. A Glycyl lysine isopeptide (Lys-Gly) (interchain with G-Cter in ubiquitin) cross-link involves residue K176. The segment at 259-360 is disordered; that stretch reads ERSHRGEGEE…PDGQCTVTEV (102 aa). Residues 284 to 294 show a composition bias toward acidic residues; sequence SIEETESDASS. Phosphoserine is present on residues S290 and S294. Residues 295 to 305 are compositionally biased toward low complexity; that stretch reads DSENVSSAVVA. The span at 307–333 shows a compositional bias: polar residues; that stretch reads HSLTQQRLLVSNANQTVSDRSDQSGTD.

Can form homooligomers. Interacts with PARsylated AXIN1, AXIN2, BLZF1, CASC3, H1-2, IPO7, LIG3, NCL, PARP1, XRCC1, XRCC5 and XRCC6. Interacts with DDB1, DHX15, IQGAP1, LRPPRC, PARP2, PRKDC, RUVBL2, TNKS1 and TNKS2. Binding often leads to interactor ubiquitination, in the presence of the appropriate E1 and E2 enzymes, and proteasomal degradation. Post-translationally, ubiquitinated; autoubiquitinated. Autoubiquitination is enhanced upon poly(ADP-ribose)-binding.

It localises to the cytoplasm. Its subcellular location is the cytosol. The protein resides in the nucleus. The enzyme catalyses S-ubiquitinyl-[E2 ubiquitin-conjugating enzyme]-L-cysteine + [acceptor protein]-L-lysine = [E2 ubiquitin-conjugating enzyme]-L-cysteine + N(6)-ubiquitinyl-[acceptor protein]-L-lysine.. Its pathway is protein modification; protein ubiquitination. Functionally, E3 ubiquitin-protein ligase that specifically binds poly-ADP-ribosylated (PARsylated) proteins and mediates their ubiquitination and subsequent degradation. May regulate many important biological processes, such as cell survival and DNA damage response. Acts as an activator of the Wnt signaling pathway by mediating the ubiquitination of PARsylated AXIN1 and AXIN2, 2 key components of the beta-catenin destruction complex. Acts in cooperation with tankyrase proteins (TNKS and TNKS2), which mediate PARsylation of target proteins AXIN1, AXIN2, BLZF1, CASC3, TNKS and TNKS2. Recognizes and binds tankyrase-dependent PARsylated proteins via its WWE domain and mediates their ubiquitination, leading to their degradation. Different ubiquitin linkage types have been observed: TNKS2 undergoes ubiquitination at 'Lys-48' and 'Lys-63', while AXIN1 is only ubiquitinated at 'Lys-48'. May regulate TNKS and TNKS2 subcellular location, preventing aggregation at a centrosomal location. Neuroprotective protein. Protects the brain against N-methyl-D-aspartate (NMDA) receptor-mediated glutamate excitotoxicity and ischemia, by interfering with PAR-induced cell death, called parthanatos. Prevents nuclear translocation of AIFM1 in a PAR-binding dependent manner. Does not affect PARP1 activation. Protects against cell death induced by DNA damaging agents, such as N-methyl-N-nitro-N-nitrosoguanidine (MNNG) and rescues cells from G1 arrest. Promotes cell survival after gamma-irradiation. Facilitates DNA repair. This is E3 ubiquitin-protein ligase RNF146 (RNF146) from Macaca fascicularis (Crab-eating macaque).